The following is a 424-amino-acid chain: DNA primase DnaG (424 aa).

The Toprim domain occupies 166 to 241; it reads DTIIIVEGRA…KVDFIARAPE (76 aa). The Mg(2+) site is built by Glu172, Asp215, and Asp217.

This sequence belongs to the archaeal DnaG primase family. In terms of assembly, forms a ternary complex with MCM helicase and DNA. Component of the archaeal exosome complex. Requires Mg(2+) as cofactor.

The catalysed reaction is ssDNA + n NTP = ssDNA/pppN(pN)n-1 hybrid + (n-1) diphosphate.. In terms of biological role, RNA polymerase that catalyzes the synthesis of short RNA molecules used as primers for DNA polymerase during DNA replication. Also part of the exosome, which is a complex involved in RNA degradation. Acts as a poly(A)-binding protein that enhances the interaction between heteromeric, adenine-rich transcripts and the exosome. This is DNA primase DnaG from Staphylothermus marinus (strain ATCC 43588 / DSM 3639 / JCM 9404 / F1).